Reading from the N-terminus, the 262-residue chain is Cytochrome c oxidase subunit 3 (262 aa).

The next 6 helical transmembrane spans lie at 39 to 59, 83 to 103, 120 to 140, 163 to 183, 198 to 218, and 240 to 260; these read YDISLFVLGNIITILTVYQWW, GMILFILSEVLFFVSFFWAFF, MGIISFNPFQIPLLNTAILLA, GLFFTVLLGIYFTILQAYEYI, FFMATGFHGIHVLIGTTFLLV, and AWYWHFVDVVWLFLYITIYWW.

This sequence belongs to the cytochrome c oxidase subunit 3 family. In terms of assembly, component of the cytochrome c oxidase (complex IV, CIV), a multisubunit enzyme composed of a catalytic core of 3 subunits and several supernumerary subunits. The complex exists as a monomer or a dimer and forms supercomplexes (SCs) in the inner mitochondrial membrane with ubiquinol-cytochrome c oxidoreductase (cytochrome b-c1 complex, complex III, CIII).

The protein resides in the mitochondrion inner membrane. It catalyses the reaction 4 Fe(II)-[cytochrome c] + O2 + 8 H(+)(in) = 4 Fe(III)-[cytochrome c] + 2 H2O + 4 H(+)(out). In terms of biological role, component of the cytochrome c oxidase, the last enzyme in the mitochondrial electron transport chain which drives oxidative phosphorylation. The respiratory chain contains 3 multisubunit complexes succinate dehydrogenase (complex II, CII), ubiquinol-cytochrome c oxidoreductase (cytochrome b-c1 complex, complex III, CIII) and cytochrome c oxidase (complex IV, CIV), that cooperate to transfer electrons derived from NADH and succinate to molecular oxygen, creating an electrochemical gradient over the inner membrane that drives transmembrane transport and the ATP synthase. Cytochrome c oxidase is the component of the respiratory chain that catalyzes the reduction of oxygen to water. Electrons originating from reduced cytochrome c in the intermembrane space (IMS) are transferred via the dinuclear copper A center (CU(A)) of subunit 2 and heme A of subunit 1 to the active site in subunit 1, a binuclear center (BNC) formed by heme A3 and copper B (CU(B)). The BNC reduces molecular oxygen to 2 water molecules using 4 electrons from cytochrome c in the IMS and 4 protons from the mitochondrial matrix. The polypeptide is Cytochrome c oxidase subunit 3 (mt:CoIII) (Drosophila melanogaster (Fruit fly)).